A 92-amino-acid chain; its full sequence is MSEIQLTQVPSFRRGFRFQWEPAQNCHVLLYPEGMIKLNESAAAVLTEVDGTRTVGAIVADLQARYPEAEGIQEDIVAFLEVAVERFWIELR.

Belongs to the PqqD family. As to quaternary structure, monomer. Interacts with PqqE.

The protein operates within cofactor biosynthesis; pyrroloquinoline quinone biosynthesis. Functionally, functions as a PqqA binding protein and presents PqqA to PqqE, in the pyrroloquinoline quinone (PQQ) biosynthetic pathway. This is PqqA binding protein from Stutzerimonas stutzeri (strain A1501) (Pseudomonas stutzeri).